The following is a 419-amino-acid chain: ATP phosphoribosyltransferase regulatory subunit (419 aa).

It belongs to the class-II aminoacyl-tRNA synthetase family. HisZ subfamily. Heteromultimer composed of HisG and HisZ subunits.

Its subcellular location is the cytoplasm. Its pathway is amino-acid biosynthesis; L-histidine biosynthesis; L-histidine from 5-phospho-alpha-D-ribose 1-diphosphate: step 1/9. Its function is as follows. Required for the first step of histidine biosynthesis. May allow the feedback regulation of ATP phosphoribosyltransferase activity by histidine. This chain is ATP phosphoribosyltransferase regulatory subunit, found in Ruminiclostridium cellulolyticum (strain ATCC 35319 / DSM 5812 / JCM 6584 / H10) (Clostridium cellulolyticum).